The sequence spans 116 residues: UPF0482 protein PC1_2049 (116 aa).

Residues 1-31 (MNHYSFSSLIRAFIPLSLVIVSAAWQPAALA) form the signal peptide.

Belongs to the UPF0482 family.

The polypeptide is UPF0482 protein PC1_2049 (Pectobacterium carotovorum subsp. carotovorum (strain PC1)).